Consider the following 229-residue polypeptide: LexA repressor (229 aa).

Positions 26-46 (FDEMKEALDLASKSGIHRLIT) form a DNA-binding region, H-T-H motif. Residues Ser-149 and Lys-187 each act as for autocatalytic cleavage activity in the active site.

This sequence belongs to the peptidase S24 family. In terms of assembly, homodimer.

It catalyses the reaction Hydrolysis of Ala-|-Gly bond in repressor LexA.. Functionally, represses a number of genes involved in the response to DNA damage (SOS response), including recA and lexA. In the presence of single-stranded DNA, RecA interacts with LexA causing an autocatalytic cleavage which disrupts the DNA-binding part of LexA, leading to derepression of the SOS regulon and eventually DNA repair. The sequence is that of LexA repressor from Phenylobacterium zucineum (strain HLK1).